The following is a 345-amino-acid chain: tRNA dimethylallyltransferase (345 aa).

9 to 16 (GPTASGKS) provides a ligand contact to ATP. 11 to 16 (TASGKS) serves as a coordination point for substrate. Interaction with substrate tRNA regions lie at residues 34–37 (DSMQ) and 195–199 (QRMIR).

This sequence belongs to the IPP transferase family. Monomer. Mg(2+) is required as a cofactor.

It catalyses the reaction adenosine(37) in tRNA + dimethylallyl diphosphate = N(6)-dimethylallyladenosine(37) in tRNA + diphosphate. Functionally, catalyzes the transfer of a dimethylallyl group onto the adenine at position 37 in tRNAs that read codons beginning with uridine, leading to the formation of N6-(dimethylallyl)adenosine (i(6)A). This Orientia tsutsugamushi (strain Boryong) (Rickettsia tsutsugamushi) protein is tRNA dimethylallyltransferase.